Here is a 466-residue protein sequence, read N- to C-terminus: Ribulose bisphosphate carboxylase large chain (466 aa).

At Lys-5 the chain carries N6,N6,N6-trimethyllysine. Asn-114 and Thr-164 together coordinate substrate. Lys-166 serves as the catalytic Proton acceptor. Lys-168 is a binding site for substrate. The Mg(2+) site is built by Lys-192, Asp-194, and Glu-195. Lys-192 is modified (N6-carboxylysine). His-285 functions as the Proton acceptor in the catalytic mechanism. Substrate is bound by residues Arg-286, His-318, and Ser-370.

This sequence belongs to the RuBisCO large chain family. Type I subfamily. In terms of assembly, heterohexadecamer of 8 large chains and 8 small chains; disulfide-linked. The disulfide link is formed within the large subunit homodimers. The cofactor is Mg(2+). In terms of processing, the disulfide bond which can form in the large chain dimeric partners within the hexadecamer appears to be associated with oxidative stress and protein turnover.

The protein localises to the plastid. It localises to the chloroplast. It catalyses the reaction 2 (2R)-3-phosphoglycerate + 2 H(+) = D-ribulose 1,5-bisphosphate + CO2 + H2O. The enzyme catalyses D-ribulose 1,5-bisphosphate + O2 = 2-phosphoglycolate + (2R)-3-phosphoglycerate + 2 H(+). Functionally, ruBisCO catalyzes two reactions: the carboxylation of D-ribulose 1,5-bisphosphate, the primary event in carbon dioxide fixation, as well as the oxidative fragmentation of the pentose substrate in the photorespiration process. Both reactions occur simultaneously and in competition at the same active site. In Gonopterodendron arboreum (Maracaibo lignum-vitae), this protein is Ribulose bisphosphate carboxylase large chain.